Reading from the N-terminus, the 872-residue chain is N-acetyltransferase eso1 (872 aa).

Positions 1-591 (MELGKSKFSW…KQVKPKTYGR (591 aa)) are polymerase type-Y. The UmuC domain occupies 29–285 (VAHIDQDAFY…LKITDIRMLG (257 aa)). Residues 533 to 567 (SADETYTCEECEQKITLSERNEHEDYHIALSISRK) form a UBZ3-type zinc finger. Residues Cys540, Cys543, His555, and His559 each contribute to the Zn(2+) site. Residues 569–602 (RYNNLVPPSHDKPKQVKPKTYGRKTGSKHYAPLS) form a disordered region. Positions 583–595 (QVKPKTYGRKTGS) are enriched in basic residues. An acetyltransferase region spans residues 592-872 (KTGSKHYAPL…KSLRYAVYES (281 aa)). The segment at 653–677 (VTCSECSMEYNSTSEEDILLHSRFH) adopts a CCHH-type zinc-finger fold.

This sequence in the C-terminal section; belongs to the acetyltransferase family. ECO subfamily. In the N-terminal section; belongs to the DNA polymerase type-Y family. Interacts with pds5.

The protein resides in the nucleus. Functionally, probable acetyltransferase required for the establishment of sister chromatid cohesion and couple the processes of cohesion and DNA replication to ensure that only sister chromatids become paired together. In contrast to the structural cohesins, the deposition and establishment factors are required only during S phase. The relevance of acetyltransferase function remains unclear. The sequence is that of N-acetyltransferase eso1 (eso1) from Schizosaccharomyces pombe (strain 972 / ATCC 24843) (Fission yeast).